A 77-amino-acid polypeptide reads, in one-letter code: uncharacterized protein (77 aa).

Residues 13-33 (VPVIRLSVFLHFFFVFPFCLL) traverse the membrane as a helical segment.

It is found in the membrane. This is an uncharacterized protein from Saccharomyces cerevisiae (strain ATCC 204508 / S288c) (Baker's yeast).